Here is a 56-residue protein sequence, read N- to C-terminus: Defensin-1 (56 aa).

A signal peptide spans Met-1–Gly-24. 3 disulfides stabilise this stretch: Cys-26–Cys-45, Cys-31–Cys-53, and Cys-35–Cys-55.

The protein resides in the secreted. Functionally, antibacterial protein involved in the immune response to septic injury. When combined with 14.026 kDa and 14.059 kDa hemolymph antimicrobial peptides, it has a strong cooperative activity against the Gram-positive bacteria B.subtilis and S.aureus, and against the Gram-negative bacteria E.coli DH5-alpha and K.pneumoniae ATCC 138833. Does not show detectable antibacterial activity when present alone. Has no hemolytic activity in human erythrocytes. This Centruroides limpidus (Mexican scorpion) protein is Defensin-1.